Here is a 185-residue protein sequence, read N- to C-terminus: Crossover junction endodeoxyribonuclease RuvC (185 aa).

Catalysis depends on residues aspartate 7, glutamate 68, and aspartate 141. Residues aspartate 7, glutamate 68, and aspartate 141 each contribute to the Mg(2+) site.

It belongs to the RuvC family. As to quaternary structure, homodimer which binds Holliday junction (HJ) DNA. The HJ becomes 2-fold symmetrical on binding to RuvC with unstacked arms; it has a different conformation from HJ DNA in complex with RuvA. In the full resolvosome a probable DNA-RuvA(4)-RuvB(12)-RuvC(2) complex forms which resolves the HJ. It depends on Mg(2+) as a cofactor.

The protein resides in the cytoplasm. The catalysed reaction is Endonucleolytic cleavage at a junction such as a reciprocal single-stranded crossover between two homologous DNA duplexes (Holliday junction).. The RuvA-RuvB-RuvC complex processes Holliday junction (HJ) DNA during genetic recombination and DNA repair. Endonuclease that resolves HJ intermediates. Cleaves cruciform DNA by making single-stranded nicks across the HJ at symmetrical positions within the homologous arms, yielding a 5'-phosphate and a 3'-hydroxyl group; requires a central core of homology in the junction. The consensus cleavage sequence is 5'-(A/T)TT(C/G)-3'. Cleavage occurs on the 3'-side of the TT dinucleotide at the point of strand exchange. HJ branch migration catalyzed by RuvA-RuvB allows RuvC to scan DNA until it finds its consensus sequence, where it cleaves and resolves the cruciform DNA. The polypeptide is Crossover junction endodeoxyribonuclease RuvC (Mycobacterium sp. (strain MCS)).